Here is a 36-residue protein sequence, read N- to C-terminus: Protein YibY (36 aa).

In Escherichia coli (strain K12), this protein is Protein YibY.